Consider the following 256-residue polypeptide: Protein RKD4 (256 aa).

An RWP-RK domain is found at Glu130 to Glu216. The stretch at Arg190–Glu224 forms a coiled coil.

The protein localises to the nucleus. Its function is as follows. Putative transcription factor. The sequence is that of Protein RKD4 (RKD4) from Arabidopsis thaliana (Mouse-ear cress).